A 93-amino-acid chain; its full sequence is MLKVNEYFNGRVKSIAFQTATLPATVGVMIPGDYEFSTSQHETMTVVSGALSVKLPESESWTRFNAGDRFEIPANATFNLKVAVDTAYLCTYG.

It belongs to the nucleoside phosphorylase PpnP family.

It catalyses the reaction a purine D-ribonucleoside + phosphate = a purine nucleobase + alpha-D-ribose 1-phosphate. The catalysed reaction is adenosine + phosphate = alpha-D-ribose 1-phosphate + adenine. It carries out the reaction cytidine + phosphate = cytosine + alpha-D-ribose 1-phosphate. The enzyme catalyses guanosine + phosphate = alpha-D-ribose 1-phosphate + guanine. It catalyses the reaction inosine + phosphate = alpha-D-ribose 1-phosphate + hypoxanthine. The catalysed reaction is thymidine + phosphate = 2-deoxy-alpha-D-ribose 1-phosphate + thymine. It carries out the reaction uridine + phosphate = alpha-D-ribose 1-phosphate + uracil. The enzyme catalyses xanthosine + phosphate = alpha-D-ribose 1-phosphate + xanthine. In terms of biological role, catalyzes the phosphorolysis of diverse nucleosides, yielding D-ribose 1-phosphate and the respective free bases. Can use uridine, adenosine, guanosine, cytidine, thymidine, inosine and xanthosine as substrates. Also catalyzes the reverse reactions. The protein is Pyrimidine/purine nucleoside phosphorylase of Hahella chejuensis (strain KCTC 2396).